The chain runs to 224 residues: UPF0758 protein Maqu_3564 (224 aa).

The region spanning 102–224 (PLRSPADTRR…VISLAERGLM (123 aa)) is the MPN domain. Zn(2+)-binding residues include H173, H175, and D186. The JAMM motif motif lies at 173 to 186 (HNHPSGVAEPSQAD).

Belongs to the UPF0758 family.

The chain is UPF0758 protein Maqu_3564 from Marinobacter nauticus (strain ATCC 700491 / DSM 11845 / VT8) (Marinobacter aquaeolei).